Here is a 137-residue protein sequence, read N- to C-terminus: Small ribosomal subunit protein bS16 (137 aa).

The protein belongs to the bacterial ribosomal protein bS16 family.

This is Small ribosomal subunit protein bS16 from Leuconostoc citreum (strain KM20).